The primary structure comprises 306 residues: Probable L,D-transpeptidase YbiS (306 aa).

An N-terminal signal peptide occupies residues 1–24; it reads MNMKLKTLFAAAFAVVGFCSTASA. In terms of domain architecture, L,D-TPase catalytic spans 99 to 234; the sequence is EGIVINSAEM…VPVGTRVQFI (136 aa). Residue His-194 is the Proton donor/acceptor of the active site. Cys-210 functions as the Nucleophile in the catalytic mechanism.

The protein belongs to the YkuD family.

Its subcellular location is the periplasm. The protein operates within cell wall biogenesis; peptidoglycan biosynthesis. Responsible, at least in part, for anchoring of the major outer membrane lipoprotein (Lpp) to the peptidoglycan via a meso-diaminopimelyl-L-Lys- bond on the terminal residue of Lpp. The protein is Probable L,D-transpeptidase YbiS (ybiS) of Escherichia coli O6:H1 (strain CFT073 / ATCC 700928 / UPEC).